The primary structure comprises 401 residues: Voltage-gated potassium channel subunit beta-1 (401 aa).

NADP(+) is bound by residues Thr-90, Trp-91, Gln-97, and Asp-119. Tyr-124 functions as the Proton donor/acceptor in the catalytic mechanism. NADP(+) contacts are provided by Asn-192, Ser-222, Arg-223, Gln-248, Trp-277, Ser-278, Pro-279, Leu-280, Ala-281, Cys-282, Lys-288, Arg-298, Gly-357, Ser-359, Gln-363, Glu-366, and Asn-367.

It belongs to the shaker potassium channel beta subunit family. Homotetramer. Interaction with tetrameric potassium channel alpha subunits gives rise to a heterooctamer. Identified in potassium channel complexes containing KCNA1, KCNA2, KCNA4, KCNA5, KCNA6, KCNAB1 and KCNAB2. Part of a complex containing KCNA1, KCNA4 and LGI1; interaction with LGI1 inhibits down-regulation of KCNA1 channel activity. Interacts with the dimer formed by GNB1 and GNG2; this enhances KCNA1 binding. Interacts with SQSTM1.

It is found in the cytoplasm. The protein resides in the membrane. The protein localises to the cell membrane. The enzyme catalyses a primary alcohol + NADP(+) = an aldehyde + NADPH + H(+). The catalysed reaction is a secondary alcohol + NADP(+) = a ketone + NADPH + H(+). In terms of biological role, regulatory subunit of the voltage-gated potassium (Kv) channels composed of pore-forming and potassium-conducting alpha subunits and of regulatory beta subunits. The beta-1/KCNAB1 cytoplasmic subunit mediates closure of delayed rectifier potassium channels by physically obstructing the pore via its N-terminal domain and increases the speed of channel closure for other family members. Promotes the inactivation of KCNA1, KCNA2, KCNA4, KCNA5 and KCNA6 alpha subunit-containing channels. Displays nicotinamide adenine dinucleotide phosphate (NADPH)-dependent aldoketoreductase activity by catalyzing the NADPH-dependent reduction of a variety of endogenous aldehydes and ketones. The binding of NADPH is required for efficient down-regulation of potassium channel activity. Oxidation of the bound NADPH restrains N-terminal domain from blocking the channel, thereby decreasing N-type inactivation of potassium channel activity. The polypeptide is Voltage-gated potassium channel subunit beta-1 (KCNAB1) (Bos taurus (Bovine)).